The following is a 592-amino-acid chain: MDNRTTYCGLVTESYIGQEIILKGWVQKRRDLGGLIFIDLRDREGVVQIVFNPDFSKEALTIAETIRSEYVIEVHGKVTMRDEAVINPKIKTGKVEVQVSEVTIINKSETPPFQIEAETDSSEDVRLKYRYLDLRREPLANTFKMRHQITRAVRNYLDESGFYEVETPVLTKSTPEGARDYLVPSRVQEGEFYALPQSPQIFKQLLMIGGFDKYYQIVKCFRDEDLRADRQPEFTQIDIEMSFVDQEDVMSMNEGMLKRIMKDVKGIDIATPFPRMTYEEAMRDYGIDKPDTRFDMKLVTLNDLASKMEFKVFKGAVESGGAVKAIVVKGASDKYSRKDIDALQEYAKIYGAKGLAWVKVTEDGLNGPIAKFFEESHASELLDATNAEMGDLILFVADKWSVVNASLANLRNKLGKELGLIDENKYNFLWVTDWPLFEYDEELDRYFAAHHPFTAPKKEHVEMLKTDKEKVQANAYDVVLNGYELGGGSIRIHDQEMQKKMFEALGFSDEEAQEQFGFLMDAFKYGAPPHGGIALGLDRMVMLLSGRSNLRDVIAFPKTASATCLLTDAPSKVDDKQLEELHIQLNIENSEK.

L-aspartate is bound at residue E176. The segment at 200–203 is aspartate; sequence QIFK. Position 222 (R222) interacts with L-aspartate. Residues 222-224 and Q231 contribute to the ATP site; that span reads RDE. H450 contributes to the L-aspartate binding site. Residue E484 coordinates ATP. Position 491 (R491) interacts with L-aspartate. 536-539 lines the ATP pocket; it reads GLDR.

Belongs to the class-II aminoacyl-tRNA synthetase family. Type 1 subfamily. In terms of assembly, homodimer.

It localises to the cytoplasm. It catalyses the reaction tRNA(Asp) + L-aspartate + ATP = L-aspartyl-tRNA(Asp) + AMP + diphosphate. Its function is as follows. Catalyzes the attachment of L-aspartate to tRNA(Asp) in a two-step reaction: L-aspartate is first activated by ATP to form Asp-AMP and then transferred to the acceptor end of tRNA(Asp). The polypeptide is Aspartate--tRNA ligase (Macrococcus caseolyticus (strain JCSC5402) (Macrococcoides caseolyticum)).